The following is a 605-amino-acid chain: Aspartate--tRNA(Asp/Asn) ligase (605 aa).

Residue E183 coordinates L-aspartate. Residues 207–210 (QLFK) are aspartate. R229 is an L-aspartate binding site. Residues 229–231 (RDE) and Q238 each bind ATP. H457 contributes to the L-aspartate binding site. Residue E497 coordinates ATP. R504 contributes to the L-aspartate binding site. 549-552 (GLDR) contributes to the ATP binding site.

This sequence belongs to the class-II aminoacyl-tRNA synthetase family. Type 1 subfamily. In terms of assembly, homodimer.

The protein resides in the cytoplasm. It catalyses the reaction tRNA(Asx) + L-aspartate + ATP = L-aspartyl-tRNA(Asx) + AMP + diphosphate. Its function is as follows. Aspartyl-tRNA synthetase with relaxed tRNA specificity since it is able to aspartylate not only its cognate tRNA(Asp) but also tRNA(Asn). Reaction proceeds in two steps: L-aspartate is first activated by ATP to form Asp-AMP and then transferred to the acceptor end of tRNA(Asp/Asn). The sequence is that of Aspartate--tRNA(Asp/Asn) ligase from Persephonella marina (strain DSM 14350 / EX-H1).